Consider the following 493-residue polypeptide: MVTRIVILGGGPAGYEAALVAATSHPETTQVTVIDCDGIGGAAVLDDCVPSKTFIASTGLRTELRRAPHLGFHIDFDDAKISLPQIHARVKTLAAAQSADITAQLLSMGVQVIAGRGELIDSTPGLARHRIKATAADGSTSEHEADVVLVATGASPRILPSAQPDGERILTWRQLYDLDALPDHLIVVGSGVTGAEFVDAYTELGVPVTVVASQDHVLPYEDADAALVLEESFAERGVRLFKNARAASVTRTGAGVLVTMTDGRTVEGSHALMTIGSVPNTSGLGLERVGIQLGRGNYLTVDRVSRTLATGIYAAGDCTGLLPLASVAAMQGRIAMYHALGEGVSPIRLRTVAATVFTRPEIAAVGVPQSVIDAGSVAARTIMLPLRTNARAKMSEMRHGFVKIFCRRSTGVVIGGVVVAPIASELILPIAVAVQNRITVNELAQTLAVYPSLSGSITEAARRLMAHDDLDCTAAQDAAEQLALVPHHLPTSN.

Residues 12–13 (PA), 35–37 (DCD), 42–43 (AA), K52, G117, D317, 324–325 (LA), and Y450 contribute to the FAD site.

Belongs to the class-I pyridine nucleotide-disulfide oxidoreductase family. In terms of assembly, homotetramer. Requires FAD as cofactor.

The catalysed reaction is a quinone + NADH + H(+) = a quinol + NAD(+). It carries out the reaction a quinone + NADPH + H(+) = a quinol + NADP(+). Its function is as follows. May contribute to virulence by increasing resistance to reactive oxygen intermediates. It can reduce 2,6-dimethyl-1,4-benzoquinone (DMBQ), 5-hydroxy-1,4-naphthaquinone (5-HNQ) and menadione. The protein is NAD(P)H dehydrogenase (quinone) (lpdA) of Mycobacterium tuberculosis (strain CDC 1551 / Oshkosh).